Consider the following 169-residue polypeptide: Cell division inhibitor SulA (169 aa).

The ftsZ binding stretch occupies residues 106 to 112 (ALRTGNY). The tract at residues 162 to 169 (KIHSNLYH) is lon protease binding.

The protein belongs to the SulA family. Interacts with FtsZ. In terms of processing, is rapidly cleaved and degraded by the Lon protease once DNA damage is repaired.

Its function is as follows. Component of the SOS system and an inhibitor of cell division. Accumulation of SulA causes rapid cessation of cell division and the appearance of long, non-septate filaments. In the presence of GTP, binds a polymerization-competent form of FtsZ in a 1:1 ratio, thus inhibiting FtsZ polymerization and therefore preventing it from participating in the assembly of the Z ring. This mechanism prevents the premature segregation of damaged DNA to daughter cells during cell division. The chain is Cell division inhibitor SulA from Shigella flexneri serotype 5b (strain 8401).